The primary structure comprises 344 residues: Signal peptide peptidase (344 aa).

Topologically, residues 1–11 (MKNCERFANLA) are lumenal. A helical transmembrane segment spans residues 12-32 (LAGLTLAPLVVRVNPNLNVIL). The Cytoplasmic segment spans residues 33–62 (TACITVYVGCFRSVKDTPPTETMSKEHAMR). Residues 63–83 (FPLVGSAMLLSLFLLFKFLSK) form a helical membrane-spanning segment. The Lumenal portion of the chain corresponds to 84–89 (DLVNAV). Residues 90-110 (LTAYFFVLGIVALSATLLPAI) traverse the membrane as a helical segment. At 111 to 136 (RRFLPNPWNDNLIVWRFPYFKSLEVE) the chain is on the cytoplasmic side. Residues 137–157 (FTKSQVVAGIPGTFFCAWYAW) form a helical membrane-spanning segment. Over 158–160 (KKH) the chain is Lumenal. A helical membrane pass occupies residues 161–181 (WLANNILGLSFCIQGIEMLSL). The Cytoplasmic segment spans residues 182 to 188 (GSFKTGA). Residues 189-209 (ILLAGLFFYDIFWVFFTPVMV) traverse the membrane as a helical segment. The active site involves aspartate 198. The Lumenal portion of the chain corresponds to 210 to 230 (SVAKSFDAPIKLLFPTGDALR). A helical transmembrane segment spans residues 231-251 (PYSMLGLGDIVIPGIFVALAL). The active site involves aspartate 239. Topologically, residues 252 to 263 (RFDVSRRRQPQY) are cytoplasmic. A helical transmembrane segment spans residues 264–284 (FTSAFIGYAVGVILTIVVMNW). The Lumenal segment spans residues 285 to 290 (FQAAQP). Positions 290-292 (PAL) match the PAL motif. A helical transmembrane segment spans residues 291–311 (ALLYIVPAVIGFLASHCIWNG). Residues 312–344 (DIKPLLAFDESKTEEATTDESKTSEEVNKAHDE) lie on the Cytoplasmic side of the membrane. The segment at 323-344 (KTEEATTDESKTSEEVNKAHDE) is disordered.

The protein belongs to the peptidase A22B family. In terms of tissue distribution, ubiquitous with the highest expression in emerging leaves, roots, and floral tissues (at the protein level). Highly detected in pollen.

It is found in the endoplasmic reticulum membrane. Intramembrane-cleaving aspartic protease (I-CLiP) that cleaves type II membrane signal peptides in the hydrophobic plane of the membrane. Catalyzes intramembrane proteolysis of some signal peptides after they have been cleaved from a preprotein, resulting in the release of the fragment from the ER membrane into the cytoplasm. Plays a critical role in the development and function of the reproductive tissues, especially in pollen development. In Arabidopsis thaliana (Mouse-ear cress), this protein is Signal peptide peptidase (SPP).